Reading from the N-terminus, the 88-residue chain is Cell division topological specificity factor (88 aa).

The protein belongs to the MinE family.

Prevents the cell division inhibition by proteins MinC and MinD at internal division sites while permitting inhibition at polar sites. This ensures cell division at the proper site by restricting the formation of a division septum at the midpoint of the long axis of the cell. The protein is Cell division topological specificity factor of Pseudoalteromonas translucida (strain TAC 125).